Consider the following 231-residue polypeptide: 2,3-bisphosphoglycerate-dependent phosphoglycerate mutase (231 aa).

Substrate-binding positions include Arg8–Asn15, Thr21–Gly22, Arg60, Glu87–Tyr90, Lys98, Arg114–Arg115, and Gly183–Asn184. The Tele-phosphohistidine intermediate role is filled by His9. The active-site Proton donor/acceptor is the Glu87.

Belongs to the phosphoglycerate mutase family. BPG-dependent PGAM subfamily.

It catalyses the reaction (2R)-2-phosphoglycerate = (2R)-3-phosphoglycerate. Its pathway is carbohydrate degradation; glycolysis; pyruvate from D-glyceraldehyde 3-phosphate: step 3/5. Catalyzes the interconversion of 2-phosphoglycerate and 3-phosphoglycerate. This chain is 2,3-bisphosphoglycerate-dependent phosphoglycerate mutase, found in Streptococcus pyogenes serotype M49 (strain NZ131).